Consider the following 87-residue polypeptide: RNA-binding protein Hfq (87 aa).

Residues 9–68 (DPYLNVLRKERIPVSIYLVNGIKLQGQVESFDQFVVLLKNTVSQMVYKHAISTVVPSRPV) form the Sm domain.

It belongs to the Hfq family. As to quaternary structure, homohexamer.

In terms of biological role, RNA chaperone that binds small regulatory RNA (sRNAs) and mRNAs to facilitate mRNA translational regulation in response to envelope stress, environmental stress and changes in metabolite concentrations. Also binds with high specificity to tRNAs. The polypeptide is RNA-binding protein Hfq (Teredinibacter turnerae (strain ATCC 39867 / T7901)).